Consider the following 319-residue polypeptide: MLQNQDTMEILSNSTSKFPTFLLTGIPGLESAHVWISIPFCCFYAIALSGNSVILFVIITQQSLHEPMYYFLFRLSATDLGLTVSSLSTTLGILWFEAREISLYSCIVQMFFLHGFTFMESGVLVATAFDRYVAICDPLRYTTILTNSRIIQMGLLMITRAIVLILPLLLLLKPLYFCRMNALSHSYCYHPDVIQLACSDIRANSICGLIDLILTTGIDTPCIVLSYILIIHSVLRIASPEEWHKVFSTCVSHVGAVAFFYIHMLSLSLVYRYGRSAPRVVHSVMANVYLLLPPVLNPIIDSVKTKQIRKAMLSLLLTK.

Topologically, residues methionine 1–serine 37 are extracellular. The chain crosses the membrane as a helical span at residues isoleucine 38–isoleucine 58. The Cytoplasmic portion of the chain corresponds to isoleucine 59–leucine 75. The helical transmembrane segment at serine 76–phenylalanine 96 threads the bilayer. At glutamate 97–cysteine 106 the chain is on the extracellular side. Cysteine 106 and cysteine 188 are disulfide-bonded. A helical transmembrane segment spans residues isoleucine 107–threonine 127. Residues alanine 128–arginine 149 lie on the Cytoplasmic side of the membrane. Residues isoleucine 150–leucine 170 form a helical membrane-spanning segment. At leucine 171 to aspartate 211 the chain is on the extracellular side. A helical membrane pass occupies residues leucine 212 to histidine 232. Residues serine 233–threonine 249 are Cytoplasmic-facing. A helical membrane pass occupies residues cysteine 250 to valine 270. Residues tyrosine 271–arginine 279 are Extracellular-facing. The helical transmembrane segment at valine 280–isoleucine 300 threads the bilayer. The Cytoplasmic segment spans residues aspartate 301 to lysine 319.

This sequence belongs to the G-protein coupled receptor 1 family.

It localises to the cell membrane. Its function is as follows. Odorant receptor. This chain is Olfactory receptor 51F1 (OR51F1), found in Homo sapiens (Human).